Consider the following 112-residue polypeptide: UPF0060 membrane protein IL2332 (112 aa).

4 helical membrane-spanning segments follow: residues 10 to 30 (LGLF…PYLW), 36 to 56 (SAWL…LLTL), 64 to 84 (VYAA…KAVE), and 90 to 110 (TYDA…AVGW).

This sequence belongs to the UPF0060 family.

The protein resides in the cell inner membrane. The protein is UPF0060 membrane protein IL2332 of Idiomarina loihiensis (strain ATCC BAA-735 / DSM 15497 / L2-TR).